The primary structure comprises 206 residues: Large ribosomal subunit protein uL4 (206 aa).

The disordered stretch occupies residues 44-77 (RQGTRAQKDRQTVKHSTKKPWRQKGTGRARAGMT). The segment covering 56–70 (VKHSTKKPWRQKGTG) has biased composition (basic residues).

The protein belongs to the universal ribosomal protein uL4 family. In terms of assembly, part of the 50S ribosomal subunit.

One of the primary rRNA binding proteins, this protein initially binds near the 5'-end of the 23S rRNA. It is important during the early stages of 50S assembly. It makes multiple contacts with different domains of the 23S rRNA in the assembled 50S subunit and ribosome. Functionally, forms part of the polypeptide exit tunnel. This is Large ribosomal subunit protein uL4 from Methylibium petroleiphilum (strain ATCC BAA-1232 / LMG 22953 / PM1).